The following is a 480-amino-acid chain: UDP-N-acetylmuramate--L-alanine ligase (480 aa).

122–128 lines the ATP pocket; it reads GTHGKTT.

This sequence belongs to the MurCDEF family.

The protein resides in the cytoplasm. The enzyme catalyses UDP-N-acetyl-alpha-D-muramate + L-alanine + ATP = UDP-N-acetyl-alpha-D-muramoyl-L-alanine + ADP + phosphate + H(+). It participates in cell wall biogenesis; peptidoglycan biosynthesis. In terms of biological role, cell wall formation. This Pseudomonas paraeruginosa (strain DSM 24068 / PA7) (Pseudomonas aeruginosa (strain PA7)) protein is UDP-N-acetylmuramate--L-alanine ligase.